A 429-amino-acid chain; its full sequence is Gap junction gamma-2 protein (429 aa).

At 1–25 the chain is on the cytoplasmic side; it reads MTNMSWSFLTRLLEEIHNHSTFVGK. A helical transmembrane segment spans residues 26–46; that stretch reads VWLTVLVVFRIVLTAVGGESI. The Extracellular segment spans residues 47 to 78; that stretch reads YSDEQTKFTCNTRQPGCDNVCYDAFAPLSHVR. A helical transmembrane segment spans residues 79 to 99; sequence FWVFQIVVISTPSVMYLGYAV. The Cytoplasmic segment spans residues 100 to 214; the sequence is HRLARASQDE…EGLMRVYVAQ (115 aa). Residues 106–200 are disordered; it reads SQDERRRASR…GPAGQHDGRR (95 aa). Basic residues predominate over residues 112–123; it reads RASRRRPSRRAP. Over residues 124–138 the composition is skewed to pro residues; that stretch reads RPPLPLPPPPHPGWP. Positions 142–173 are enriched in acidic residues; sequence DLGEEEPMLGLGEEDEDPGVAEGLGEDEEAED. The helical transmembrane segment at 215 to 235 threads the bilayer; sequence LVARAAFEVAFLVGQYLLYGF. Residues 236–263 are Extracellular-facing; the sequence is EVRPFFACSRQPCPHVVDCFVSRPTEKT. A helical membrane pass occupies residues 264–284; it reads VFLLVMYVVSCLCLLLNLCEM. Residues 285-429 are Cytoplasmic-facing; that stretch reads AHLGLGNAQD…SREGKTTVWI (145 aa). Disordered regions lie at residues 296–316 and 361–429; these read VRGR…PPCA and LGDL…TVWI. The span at 303–316 shows a compositional bias: pro residues; sequence PASPGPMPRPPPCA. The residue at position 366 (Ser-366) is a Phosphoserine. Low complexity predominate over residues 372–395; the sequence is LPANARGPPKPGAPASGSGSATSG.

Belongs to the connexin family. Gamma-type subfamily. In terms of assembly, a connexon is composed of a hexamer of connexins. Interacts with TJP1.

The protein localises to the cell membrane. It localises to the cell junction. Its subcellular location is the gap junction. Functionally, one gap junction consists of a cluster of closely packed pairs of transmembrane channels, the connexons, through which materials of low MW diffuse from one cell to a neighboring cell. May play a role in myelination in central and peripheral nervous systems. The protein is Gap junction gamma-2 protein (GJC2) of Bos taurus (Bovine).